The chain runs to 304 residues: 6-dehydroglucose reductase (304 aa).

Trp28, Arg29, and Asp56 together coordinate NADP(+). Tyr61 acts as the Proton donor in catalysis. D-glucose-binding residues include Tyr61, His133, and Arg134. NADP(+) is bound by residues Ser163, Asn164, Gln185, Ser215, Leu217, Gly219, Gly268, Ser269, Gln270, and Arg274.

Belongs to the aldo/keto reductase family.

It catalyses the reaction D-glucose + NADP(+) = 6-dehydro-D-glucose + NADPH + H(+). Functionally, part of the alkanesulfonate monooxygenase (sulfo-ASMO) pathway, a D-sulfoquinovose degradation pathway that enables the complete utilization of all carbons within sulfoquinovose (SQ) with concomitant production of inorganic sulfite. Catalyzes the NADP-dependent reduction of 6-dehydro-D-glucose to D-glucose. Can also catalyze the reversible reaction, the formation of 6-dehydro-D-glucose from D-glucose in the presence of NADP(+). The protein is 6-dehydroglucose reductase of Novosphingobium aromaticivorans (strain ATCC 700278 / DSM 12444 / CCUG 56034 / CIP 105152 / NBRC 16084 / F199).